A 578-amino-acid polypeptide reads, in one-letter code: 2-succinyl-5-enolpyruvyl-6-hydroxy-3-cyclohexene-1-carboxylate synthase (578 aa).

The tract at residues 186–208 is disordered; the sequence is LPAAGGEHHPAEPRSTPWDGPVP.

This sequence belongs to the TPP enzyme family. MenD subfamily. Homodimer. It depends on Mg(2+) as a cofactor. Mn(2+) is required as a cofactor. The cofactor is thiamine diphosphate.

The catalysed reaction is isochorismate + 2-oxoglutarate + H(+) = 5-enolpyruvoyl-6-hydroxy-2-succinyl-cyclohex-3-ene-1-carboxylate + CO2. It participates in quinol/quinone metabolism; 1,4-dihydroxy-2-naphthoate biosynthesis; 1,4-dihydroxy-2-naphthoate from chorismate: step 2/7. It functions in the pathway cofactor biosynthesis; phylloquinone biosynthesis. Its function is as follows. Catalyzes the thiamine diphosphate-dependent decarboxylation of 2-oxoglutarate and the subsequent addition of the resulting succinic semialdehyde-thiamine pyrophosphate anion to isochorismate to yield 2-succinyl-5-enolpyruvyl-6-hydroxy-3-cyclohexene-1-carboxylate (SEPHCHC). This chain is 2-succinyl-5-enolpyruvyl-6-hydroxy-3-cyclohexene-1-carboxylate synthase, found in Synechococcus sp. (strain WH7803).